The following is a 197-amino-acid chain: MRQIILASASPRRKELLKQLIGDNFLVYASSYEESPCPGMHPKELLLKHSAEKARDVAKHFNSGLVISADTSVFFNGELLGKPKSSEEAEKMLKLLSGQRFLVITGLTVLDLDSGKEISELKSTTVWMDKISNEQISAYVRTGEPLDKAGAFAVQGKGAAFVEKIEGDFFNVVGLPLFRLGKILQKAGVSIFEEGLS.

The active-site Proton acceptor is the Asp70.

This sequence belongs to the Maf family. YhdE subfamily. It depends on a divalent metal cation as a cofactor.

The protein localises to the cytoplasm. The catalysed reaction is dTTP + H2O = dTMP + diphosphate + H(+). It carries out the reaction UTP + H2O = UMP + diphosphate + H(+). Nucleoside triphosphate pyrophosphatase that hydrolyzes dTTP and UTP. May have a dual role in cell division arrest and in preventing the incorporation of modified nucleotides into cellular nucleic acids. The protein is dTTP/UTP pyrophosphatase of Methanosarcina barkeri (strain Fusaro / DSM 804).